A 138-amino-acid chain; its full sequence is Ribulose bisphosphate carboxylase small subunit (138 aa).

Belongs to the RuBisCO small chain family. As to quaternary structure, heterohexadecamer of 8 large and 8 small subunits.

It is found in the plastid. Its subcellular location is the chloroplast. Functionally, ruBisCO catalyzes two reactions: the carboxylation of D-ribulose 1,5-bisphosphate, the primary event in carbon dioxide fixation, as well as the oxidative fragmentation of the pentose substrate in the photorespiration process. Both reactions occur simultaneously and in competition at the same active site. Although the small subunit is not catalytic it is essential for maximal activity. This Pyropia yezoensis (Susabi-nori) protein is Ribulose bisphosphate carboxylase small subunit.